The chain runs to 239 residues: MTQPISSALVLFSGGQDSATCLAWALDRFDRVETIGFDYGQRHAIELACRPKVRAAIRQMSPVWAEKLGEDHMIDAGVLKSLGATAMTHEVEISMTAAGLPNTFVPGRNLLFFTLAGALAVRRGIGVLVGGMCETDYSGYPDCRADTLKAQEQTLRLGLDADIRIDAPLMYLDKAATWQLAQELGGDALVALIGEETHTCYLGERGARHDWGYGCGTCPACELRSNGWQRWQDGKAAAP.

An ATP-binding site is contributed by Phe12–Leu22. Cys200, Cys215, Cys218, and Cys221 together coordinate Zn(2+).

Belongs to the QueC family. Zn(2+) is required as a cofactor.

It carries out the reaction 7-carboxy-7-deazaguanine + NH4(+) + ATP = 7-cyano-7-deazaguanine + ADP + phosphate + H2O + H(+). It participates in purine metabolism; 7-cyano-7-deazaguanine biosynthesis. In terms of biological role, catalyzes the ATP-dependent conversion of 7-carboxy-7-deazaguanine (CDG) to 7-cyano-7-deazaguanine (preQ(0)). The sequence is that of 7-cyano-7-deazaguanine synthase from Hyphomonas neptunium (strain ATCC 15444).